Here is a 388-residue protein sequence, read N- to C-terminus: MKHLQRFFSSDASGGIILIIAAALAMLMANMGATSGWYHHFLETPVQLRVGALEINKNMLLWINDALMAVFFLLIGLEVKRELLQGSLASLRQAVFPVIAAIGGMIVPALLYLAFNYSDPVTREGWAIPAATDIAFALGVLALLGSRVPLALKIFLMALAIIDDLGAIIIIALFYTSDLSIVSLGVAAFAIVVLALLNLCGVRRTGVYILVGAILWTAVLKSGVHATLAGVIVGFFIPLKEKHGRSPAKRLEHILHPWVAYLILPLFAFANAGVSLQGVTIDGLTSMLPLGIIAGLLIGKPLGISLFCWLALRFKLAHLPQGTTYQQIMAVGILCGIGFTMSIFIASLAFGNVDPALINWAKLGILIGSLLSAVVGYSWLRARLNAPA.

Helical transmembrane passes span 14 to 34 (GGII…MGAT), 59 to 79 (MLLW…GLEV), 95 to 115 (VFPV…YLAF), 125 to 145 (GWAI…ALLG), 154 to 174 (IFLM…IALF), 179 to 199 (LSIV…LLNL), 219 to 239 (VLKS…FIPL), 254 to 274 (ILHP…NAGV), 292 to 312 (IIAG…WLAL), 328 to 348 (IMAV…IASL), and 356 to 376 (ALIN…AVVG).

This sequence belongs to the NhaA Na(+)/H(+) (TC 2.A.33) antiporter family.

Its subcellular location is the cell inner membrane. The catalysed reaction is Na(+)(in) + 2 H(+)(out) = Na(+)(out) + 2 H(+)(in). Functionally, na(+)/H(+) antiporter that extrudes sodium in exchange for external protons. The protein is Na(+)/H(+) antiporter NhaA of Salmonella arizonae (strain ATCC BAA-731 / CDC346-86 / RSK2980).